The following is a 313-amino-acid chain: tRNA dimethylallyltransferase (313 aa).

10–17 (GPTASGKT) contacts ATP. Residue 12-17 (TASGKT) participates in substrate binding. 3 interaction with substrate tRNA regions span residues 35 to 38 (DSAM), 159 to 163 (QRIQR), and 240 to 245 (RCVGYR).

This sequence belongs to the IPP transferase family. In terms of assembly, monomer. Mg(2+) serves as cofactor.

It carries out the reaction adenosine(37) in tRNA + dimethylallyl diphosphate = N(6)-dimethylallyladenosine(37) in tRNA + diphosphate. Catalyzes the transfer of a dimethylallyl group onto the adenine at position 37 in tRNAs that read codons beginning with uridine, leading to the formation of N6-(dimethylallyl)adenosine (i(6)A). The chain is tRNA dimethylallyltransferase from Legionella pneumophila subsp. pneumophila (strain Philadelphia 1 / ATCC 33152 / DSM 7513).